Here is a 289-residue protein sequence, read N- to C-terminus: Cell division protein ZipA (289 aa).

A topological domain (periplasmic) is located at residue Met-1. Residues 2-22 (DIGLREWLIVIGLIVIAGILF) traverse the membrane as a helical segment. Over 23–289 (DGWRRMRGGK…HERRSLMQKR (267 aa)) the chain is Cytoplasmic. The interval 66–141 (REPSFDEQDL…KEREKAPAVA (76 aa)) is disordered. Basic and acidic residues predominate over residues 81–99 (REAKERKGGKRQEEPRQGD). Over residues 100 to 114 (LDLDEGLALEADPSD) the composition is skewed to acidic residues.

Belongs to the ZipA family. As to quaternary structure, interacts with FtsZ via their C-terminal domains.

It localises to the cell inner membrane. Essential cell division protein that stabilizes the FtsZ protofilaments by cross-linking them and that serves as a cytoplasmic membrane anchor for the Z ring. Also required for the recruitment to the septal ring of downstream cell division proteins. This Pseudomonas aeruginosa (strain LESB58) protein is Cell division protein ZipA.